The chain runs to 131 residues: D-ribose pyranase (131 aa).

The active-site Proton donor is histidine 20. Substrate-binding positions include aspartate 28, histidine 98, and 120–122 (FSN).

This sequence belongs to the RbsD / FucU family. RbsD subfamily. In terms of assembly, homodecamer.

It is found in the cytoplasm. The catalysed reaction is beta-D-ribopyranose = beta-D-ribofuranose. The protein operates within carbohydrate metabolism; D-ribose degradation; D-ribose 5-phosphate from beta-D-ribopyranose: step 1/2. Catalyzes the interconversion of beta-pyran and beta-furan forms of D-ribose. This chain is D-ribose pyranase, found in Oenococcus oeni (strain ATCC BAA-331 / PSU-1).